Reading from the N-terminus, the 270-residue chain is Inositol monophosphatase (270 aa).

Mg(2+) contacts are provided by glutamate 71, aspartate 91, leucine 93, and aspartate 94. Glutamate 71 provides a ligand contact to substrate. Substrate is bound by residues 93 to 96 (LDGT), 194 to 196 (GSC), glutamate 213, and aspartate 221. Aspartate 221 contacts Mg(2+).

This sequence belongs to the inositol monophosphatase superfamily. Mg(2+) serves as cofactor.

It catalyses the reaction a myo-inositol phosphate + H2O = myo-inositol + phosphate. The protein operates within polyol metabolism; myo-inositol biosynthesis; myo-inositol from D-glucose 6-phosphate: step 2/2. With respect to regulation, inhibited by Li(+). In terms of biological role, responsible for the provision of inositol required for synthesis of phosphatidylinositol and polyphosphoinositides. The sequence is that of Inositol monophosphatase (IMP1) from Mesembryanthemum crystallinum (Common ice plant).